Consider the following 197-residue polypeptide: Isopentenyl-diphosphate Delta-isomerase (197 aa).

2 residues coordinate Mn(2+): H41 and H48. The Nudix hydrolase domain occupies 46 to 183 (QLHRAFSVFL…AWFMTVLDAA (138 aa)). C83 is a catalytic residue. Mn(2+) is bound at residue H85. E103 lines the Mg(2+) pocket. Mn(2+)-binding residues include E130 and E132. E132 is a catalytic residue.

The protein belongs to the IPP isomerase type 1 family. Mg(2+) is required as a cofactor. Mn(2+) serves as cofactor.

The protein resides in the cytoplasm. The enzyme catalyses isopentenyl diphosphate = dimethylallyl diphosphate. Its pathway is isoprenoid biosynthesis; dimethylallyl diphosphate biosynthesis; dimethylallyl diphosphate from isopentenyl diphosphate: step 1/1. In terms of biological role, catalyzes the 1,3-allylic rearrangement of the homoallylic substrate isopentenyl (IPP) to its highly electrophilic allylic isomer, dimethylallyl diphosphate (DMAPP). In Streptomyces griseus subsp. griseus (strain JCM 4626 / CBS 651.72 / NBRC 13350 / KCC S-0626 / ISP 5235), this protein is Isopentenyl-diphosphate Delta-isomerase.